Consider the following 106-residue polypeptide: A-type ATP synthase subunit F (106 aa).

It belongs to the V-ATPase F subunit family. As to quaternary structure, has multiple subunits with at least A(3), B(3), C, D, E, F, H, I and proteolipid K(x).

Its subcellular location is the cell membrane. Its function is as follows. Component of the A-type ATP synthase that produces ATP from ADP in the presence of a proton gradient across the membrane. The sequence is that of A-type ATP synthase subunit F from Methanothermobacter thermautotrophicus (strain ATCC 29096 / DSM 1053 / JCM 10044 / NBRC 100330 / Delta H) (Methanobacterium thermoautotrophicum).